A 269-amino-acid chain; its full sequence is 2-dehydro-3-deoxyphosphooctonate aldolase (269 aa).

Belongs to the KdsA family.

Its subcellular location is the cytoplasm. It carries out the reaction D-arabinose 5-phosphate + phosphoenolpyruvate + H2O = 3-deoxy-alpha-D-manno-2-octulosonate-8-phosphate + phosphate. The protein operates within carbohydrate biosynthesis; 3-deoxy-D-manno-octulosonate biosynthesis; 3-deoxy-D-manno-octulosonate from D-ribulose 5-phosphate: step 2/3. It functions in the pathway bacterial outer membrane biogenesis; lipopolysaccharide biosynthesis. This chain is 2-dehydro-3-deoxyphosphooctonate aldolase, found in Chlamydia caviae (strain ATCC VR-813 / DSM 19441 / 03DC25 / GPIC) (Chlamydophila caviae).